The primary structure comprises 416 residues: Glutamyl-tRNA reductase (416 aa).

Residues 50-53, Ser109, 114-116, and Gln120 each bind substrate; these read TCNR and EPQ. The Nucleophile role is filled by Cys51. 189 to 194 is a binding site for NADP(+); it reads GAGEMI.

Belongs to the glutamyl-tRNA reductase family. As to quaternary structure, homodimer.

It catalyses the reaction (S)-4-amino-5-oxopentanoate + tRNA(Glu) + NADP(+) = L-glutamyl-tRNA(Glu) + NADPH + H(+). It participates in porphyrin-containing compound metabolism; protoporphyrin-IX biosynthesis; 5-aminolevulinate from L-glutamyl-tRNA(Glu): step 1/2. In terms of biological role, catalyzes the NADPH-dependent reduction of glutamyl-tRNA(Glu) to glutamate 1-semialdehyde (GSA). This is Glutamyl-tRNA reductase from Vesicomyosocius okutanii subsp. Calyptogena okutanii (strain HA).